Reading from the N-terminus, the 186-residue chain is Lipid A palmitoyltransferase PagP (186 aa).

Positions 1 to 25 (MKVSKYVAIFFFVFIQLISVGKVFA) are cleaved as a signal peptide. Catalysis depends on residues His58, Asp101, and Ser102.

This sequence belongs to the lipid A palmitoyltransferase family. As to quaternary structure, homodimer.

It is found in the cell outer membrane. It catalyses the reaction lipid A (E. coli) + a 1-hexadecanoyl-2-acyl-sn-glycero-3-phosphocholine = hepta-acyl lipid A (E. coli) + a 2-acyl-sn-glycero-3-phosphocholine. The catalysed reaction is lipid IIA + a 1-hexadecanoyl-2-acyl-sn-glycero-3-phosphocholine = lipid IIB + a 2-acyl-sn-glycero-3-phosphocholine. It carries out the reaction lipid IVA (E. coli) + a 1-hexadecanoyl-2-acyl-sn-glycero-3-phosphocholine = lipid IVB (E. coli) + a 2-acyl-sn-glycero-3-phosphocholine. Its function is as follows. Transfers a palmitate residue from the sn-1 position of a phospholipid to the N-linked hydroxymyristate on the proximal unit of lipid A or its precursors. This Escherichia coli O6:K15:H31 (strain 536 / UPEC) protein is Lipid A palmitoyltransferase PagP.